The sequence spans 143 residues: Myocilin opposite strand protein (143 aa).

The tract at residues 65-111 is disordered; the sequence is MATRDETITKKSGEGEEMLPSMGMDHESPSKAHLMVPPAPPPSPADA. Basic and acidic residues predominate over residues 66-78; that stretch reads ATRDETITKKSGE.

The polypeptide is Myocilin opposite strand protein (Mus musculus (Mouse)).